Here is a 498-residue protein sequence, read N- to C-terminus: DNA-directed RNA polymerase subunit Rpo2N (498 aa).

Belongs to the RNA polymerase beta chain family. In terms of assembly, part of the RNA polymerase complex.

Its subcellular location is the cytoplasm. It carries out the reaction RNA(n) + a ribonucleoside 5'-triphosphate = RNA(n+1) + diphosphate. Its function is as follows. DNA-dependent RNA polymerase (RNAP) catalyzes the transcription of DNA into RNA using the four ribonucleoside triphosphates as substrates. The Rpo2 subunit (Rpo2N and Rpo2C in this organism) is implicated in DNA promoter recognition and in nucleotide binding. The chain is DNA-directed RNA polymerase subunit Rpo2N from Methanocaldococcus jannaschii (strain ATCC 43067 / DSM 2661 / JAL-1 / JCM 10045 / NBRC 100440) (Methanococcus jannaschii).